The chain runs to 417 residues: Imidazolonepropionase (417 aa).

2 residues coordinate Fe(3+): His-80 and His-82. Positions 80 and 82 each coordinate Zn(2+). 4-imidazolone-5-propanoate-binding residues include Arg-89, Tyr-152, and His-187. Tyr-152 lines the N-formimidoyl-L-glutamate pocket. His-252 provides a ligand contact to Fe(3+). A Zn(2+)-binding site is contributed by His-252. Glu-255 is a binding site for 4-imidazolone-5-propanoate. Asp-326 is a binding site for Fe(3+). Asp-326 contributes to the Zn(2+) binding site. Positions 328 and 330 each coordinate N-formimidoyl-L-glutamate. Ser-331 serves as a coordination point for 4-imidazolone-5-propanoate.

It belongs to the metallo-dependent hydrolases superfamily. HutI family. It depends on Zn(2+) as a cofactor. Requires Fe(3+) as cofactor.

It localises to the cytoplasm. The enzyme catalyses 4-imidazolone-5-propanoate + H2O = N-formimidoyl-L-glutamate. The protein operates within amino-acid degradation; L-histidine degradation into L-glutamate; N-formimidoyl-L-glutamate from L-histidine: step 3/3. Catalyzes the hydrolytic cleavage of the carbon-nitrogen bond in imidazolone-5-propanoate to yield N-formimidoyl-L-glutamate. It is the third step in the universal histidine degradation pathway. This Bacteroides thetaiotaomicron (strain ATCC 29148 / DSM 2079 / JCM 5827 / CCUG 10774 / NCTC 10582 / VPI-5482 / E50) protein is Imidazolonepropionase.